Reading from the N-terminus, the 206-residue chain is Urease accessory protein UreG (206 aa).

Residue 11-18 (GPVGAGKT) coordinates GTP.

Belongs to the SIMIBI class G3E GTPase family. UreG subfamily. In terms of assembly, homodimer. UreD, UreF and UreG form a complex that acts as a GTP-hydrolysis-dependent molecular chaperone, activating the urease apoprotein by helping to assemble the nickel containing metallocenter of UreC. The UreE protein probably delivers the nickel.

Its subcellular location is the cytoplasm. Functionally, facilitates the functional incorporation of the urease nickel metallocenter. This process requires GTP hydrolysis, probably effectuated by UreG. In Ureaplasma parvum serovar 3 (strain ATCC 700970), this protein is Urease accessory protein UreG.